A 485-amino-acid chain; its full sequence is NADH-quinone oxidoreductase subunit N (485 aa).

Helical transmembrane passes span 8–28, 35–55, 75–95, 105–125, 127–147, 159–179, 203–223, 235–255, 271–291, 297–317, 326–346, 374–394, 408–430, and 455–475; these read LIALLPLLIVGLTVVVVMLSI, FLNATLSVLGLNAALVSLWFV, LYTGLVLLASLATCTFAYPWL, FYLLVLIAALGGILLAGANHL, ALFLGIELISLPLFGLVGYAF, YTILSAAASSFLLFGMALVYA, LLAGLGLMIVGLGFKLSLVPF, PAPVSTFLATASKIAIFGVVM, VVLGLIAFASIIFGNLMALSQ, LLGYSSISHLGYLLVALIALQ, VGVYLAGYLFSSLGAFGVVSL, AVMTVMMLSLAGIPMTLGFIG, WWLVAAVVVGSAIGLYYYLRVAV, and IVVLISALLVLVLGIWPQPLI.

It belongs to the complex I subunit 2 family. In terms of assembly, NDH-1 is composed of 13 different subunits. Subunits NuoA, H, J, K, L, M, N constitute the membrane sector of the complex.

The protein resides in the cell inner membrane. The enzyme catalyses a quinone + NADH + 5 H(+)(in) = a quinol + NAD(+) + 4 H(+)(out). Functionally, NDH-1 shuttles electrons from NADH, via FMN and iron-sulfur (Fe-S) centers, to quinones in the respiratory chain. The immediate electron acceptor for the enzyme in this species is believed to be ubiquinone. Couples the redox reaction to proton translocation (for every two electrons transferred, four hydrogen ions are translocated across the cytoplasmic membrane), and thus conserves the redox energy in a proton gradient. The protein is NADH-quinone oxidoreductase subunit N of Klebsiella pneumoniae (strain 342).